The sequence spans 101 residues: UPF0134 protein MPN_675 (101 aa).

The protein belongs to the UPF0134 family.

This chain is UPF0134 protein MPN_675, found in Mycoplasma pneumoniae (strain ATCC 29342 / M129 / Subtype 1) (Mycoplasmoides pneumoniae).